A 388-amino-acid chain; its full sequence is Salivary protein Tsal2A (388 aa).

The signal sequence occupies residues 1 to 18 (MSLLYGLLILAFTRSCLV). Residue asparagine 260 is glycosylated (N-linked (GlcNAc...) asparagine).

Belongs to the DNA/RNA non-specific endonuclease family. The cofactor is a divalent metal cation. In terms of tissue distribution, saliva (at protein level).

It is found in the secreted. Its function is as follows. Binds double-stranded DNA (dsDNA) with high affinity. Binds double-stranded RNA. Binds single-stranded DNA with lower affinity and with a preference for purine-rich sequences. Shows residual nuclease activity for dsDNA. Facilitates blood meal intake by lowering the local viscosity created by the release of host DNA. The protein is Salivary protein Tsal2A of Glossina morsitans morsitans (Savannah tsetse fly).